The following is a 552-amino-acid chain: Membrane protein insertase YidC (552 aa).

Residues 3–23 (IKRTVLWVIFFMSAVMLFDNW) form a helical membrane-spanning segment. The tract at residues 35-59 (PSATPTKTVGSAAPGTTTPGTQPAD) is disordered. Residues 42–59 (TVGSAAPGTTTPGTQPAD) show a composition bias toward low complexity. The next 3 helical transmembrane spans lie at 364-384 (WGWS…PLSA), 430-450 (FGGC…YWVL), and 504-524 (MMFM…GLVL).

The protein belongs to the OXA1/ALB3/YidC family. Type 1 subfamily. Interacts with the Sec translocase complex via SecD. Specifically interacts with transmembrane segments of nascent integral membrane proteins during membrane integration.

Its subcellular location is the cell inner membrane. Its function is as follows. Required for the insertion and/or proper folding and/or complex formation of integral membrane proteins into the membrane. Involved in integration of membrane proteins that insert both dependently and independently of the Sec translocase complex, as well as at least some lipoproteins. Aids folding of multispanning membrane proteins. The chain is Membrane protein insertase YidC from Paraburkholderia phytofirmans (strain DSM 17436 / LMG 22146 / PsJN) (Burkholderia phytofirmans).